The chain runs to 575 residues: U3 small nucleolar RNA-associated protein 9 (575 aa).

2 stretches are compositionally biased toward basic and acidic residues: residues 340–355 (NEKN…KLEE) and 364–375 (VQHEKKETETKI). Residues 340 to 375 (NEKNNADEADQKKLEEKEEEAQPEVQHEKKETETKI) form a disordered region. Phosphoserine is present on residues S547 and S564.

In terms of assembly, interacts with snoRNA U3. Interacts with MPP10. Component of the ribosomal small subunit (SSU) processome composed of at least 40 protein subunits and snoRNA U3. In the absence of snoRNA3, forms a complex with other t-UTPs. This complex can associate with pre-18S ribosomal RNAs.

It localises to the nucleus. Its subcellular location is the nucleolus. In terms of biological role, involved in nucleolar processing of pre-18S ribosomal RNA. Required for optimal pre-ribosomal RNA transcription by RNA polymerase I together with a subset of U3 proteins required for transcription (t-UTPs). In Saccharomyces cerevisiae (strain ATCC 204508 / S288c) (Baker's yeast), this protein is U3 small nucleolar RNA-associated protein 9 (UTP9).